The primary structure comprises 2896 residues: 3'-5' exoribonuclease HELZ2 (2896 aa).

C3H1-type zinc fingers lie at residues 90–114 and 217–246; these read VCHY…RSRE and GQPP…HSAV. Residues 287 to 311 form a C2H2-type; atypical zinc finger; it reads LYCPACLVTCHSQEAFENHCASSEH. The C3H1-type 3 zinc-finger motif lies at 327-357; the sequence is SPPPGLSKFELCPKPDLCEYGDACTKAHSAQ. In terms of domain architecture, UvrD-like helicase ATP-binding spans 770–1126; that stretch reads VALIAGWGPG…VVLSTVHTCQ (357 aa). An ATP-binding site is contributed by 791 to 798; it reads GPFGTGKT. The interval 810 to 1306 is interaction with THRAP3; that stretch reads RRPETKVLIC…ESTEAEDAEA (497 aa). Positions 914-917 match the DEAA box motif; that stretch reads DEAA. Serine 1253 is subject to Phosphoserine. 3 short sequence motifs (LXXLL motif) span residues 1322–1326, 1365–1369, and 1420–1424; these read LRELL, LRKLL, and LVQLL. An RNB domain is found at 1581-1938; the sequence is REDCRAFLTF…VLQRQILLAL (358 aa). Positions 2259-2263 match the LXXLL motif 4 motif; it reads LEGLP. The interval 2382-2896 is interaction with THRAP3; that stretch reads PSRFLERQTY…RVCRRPTMPS (515 aa). The UvrD-like helicase ATP-binding 2 domain maps to 2400-2675; it reads LNPSQNVAVR…HMLDTQYRMH (276 aa). 2421 to 2428 contributes to the ATP binding site; the sequence is GPPGTGKT. The short motif at 2476 to 2480 is the LXXLL motif 5 element; it reads LAGLL.

Belongs to the DNA2/NAM7 helicase family. As to quaternary structure, interacts with PPARA (via DNA-binding domain) and PPARG; the interaction stimulates the transcriptional activity of PPARA and PPARG. Interacts with THRAP3; the interaction is direct and HELZ2 and THRAP3 synergistically enhance the transcriptional activity of PPARG. It is probably part of the peroxisome proliferator activated receptor alpha interacting complex (PRIC). In terms of tissue distribution, expressed in various tissues including heart, pancreas, skeletal muscle, colon, spleen, liver, kidney, lung, peripheral blood and placenta.

The protein localises to the cytoplasm. It catalyses the reaction Exonucleolytic cleavage in the 3'- to 5'-direction to yield nucleoside 5'-phosphates.. It carries out the reaction ATP + H2O = ADP + phosphate + H(+). In terms of biological role, can degrade highly structured RNAs through its concerted ATP-dependent RNA helicase and 3' to 5' exoribonuclease activities. Shows a strong preference for pyrimidine over purine residues for its nuclease activity. Acts as a transcriptional coactivator for a number of nuclear receptors including PPARA, PPARG, THRA, THRB and RXRA. The protein is 3'-5' exoribonuclease HELZ2 of Homo sapiens (Human).